The following is a 172-amino-acid chain: Protein GrpE (172 aa).

This sequence belongs to the GrpE family. Homodimer.

The protein resides in the cytoplasm. Participates actively in the response to hyperosmotic and heat shock by preventing the aggregation of stress-denatured proteins, in association with DnaK and GrpE. It is the nucleotide exchange factor for DnaK and may function as a thermosensor. Unfolded proteins bind initially to DnaJ; upon interaction with the DnaJ-bound protein, DnaK hydrolyzes its bound ATP, resulting in the formation of a stable complex. GrpE releases ADP from DnaK; ATP binding to DnaK triggers the release of the substrate protein, thus completing the reaction cycle. Several rounds of ATP-dependent interactions between DnaJ, DnaK and GrpE are required for fully efficient folding. The chain is Protein GrpE from Thermotoga petrophila (strain ATCC BAA-488 / DSM 13995 / JCM 10881 / RKU-1).